A 342-amino-acid polypeptide reads, in one-letter code: Methionyl-tRNA formyltransferase (342 aa).

Serine 108 to proline 111 is a (6S)-5,6,7,8-tetrahydrofolate binding site.

The protein belongs to the Fmt family.

The catalysed reaction is L-methionyl-tRNA(fMet) + (6R)-10-formyltetrahydrofolate = N-formyl-L-methionyl-tRNA(fMet) + (6S)-5,6,7,8-tetrahydrofolate + H(+). Its function is as follows. Attaches a formyl group to the free amino group of methionyl-tRNA(fMet). The formyl group appears to play a dual role in the initiator identity of N-formylmethionyl-tRNA by promoting its recognition by IF2 and preventing the misappropriation of this tRNA by the elongation apparatus. The polypeptide is Methionyl-tRNA formyltransferase (Prochlorococcus marinus (strain MIT 9303)).